The following is a 170-amino-acid chain: Type IV pilus assembly protein C (170 aa).

The signal sequence occupies residues 1–23 (MKSKLPLILINLSLISSPLGANA). The disordered stretch occupies residues 87 to 107 (KTVSKPAKSNTPPQQAPVNNS). Positions 93–107 (AKSNTPPQQAPVNNS) are enriched in polar residues. Positions 109-166 (RSILEAELSNERKALTEAQKMLSQARLAKGGNINHQKINALQSNVLDRQQNIQALQRE) form a coiled coil.

It is found in the periplasm. Required for stabilizing type IV pilus (T4p) in extended, nonretracted conformation on the bacterial cell surface. The polypeptide is Type IV pilus assembly protein C (Neisseria gonorrhoeae (strain ATCC 700825 / FA 1090)).